The sequence spans 547 residues: Chaperonin GroEL (547 aa).

ATP contacts are provided by residues 30 to 33 (TLGP), lysine 51, 87 to 91 (DGTTT), glycine 415, and aspartate 496. A disordered region spans residues 527-547 (SDKEEPMPMRGGMGGMGGMDF). Positions 537 to 547 (GGMGGMGGMDF) are enriched in gly residues.

It belongs to the chaperonin (HSP60) family. As to quaternary structure, forms a cylinder of 14 subunits composed of two heptameric rings stacked back-to-back. Interacts with the co-chaperonin GroES.

Its subcellular location is the cytoplasm. It carries out the reaction ATP + H2O + a folded polypeptide = ADP + phosphate + an unfolded polypeptide.. In terms of biological role, together with its co-chaperonin GroES, plays an essential role in assisting protein folding. The GroEL-GroES system forms a nano-cage that allows encapsulation of the non-native substrate proteins and provides a physical environment optimized to promote and accelerate protein folding. The protein is Chaperonin GroEL of Rickettsia massiliae (strain Mtu5).